A 372-amino-acid polypeptide reads, in one-letter code: Queuine tRNA-ribosyltransferase (372 aa).

The active-site Proton acceptor is aspartate 90. Substrate contacts are provided by residues aspartate 90–phenylalanine 94, aspartate 144, glutamine 193, and glycine 220. Residues glycine 251–aspartate 257 form an RNA binding region. The Nucleophile role is filled by aspartate 270. The segment at threonine 275–arginine 279 is RNA binding; important for wobble base 34 recognition. Zn(2+)-binding residues include cysteine 308, cysteine 310, cysteine 313, and histidine 339.

It belongs to the queuine tRNA-ribosyltransferase family. Homodimer. Within each dimer, one monomer is responsible for RNA recognition and catalysis, while the other monomer binds to the replacement base PreQ1. Zn(2+) is required as a cofactor.

The enzyme catalyses 7-aminomethyl-7-carbaguanine + guanosine(34) in tRNA = 7-aminomethyl-7-carbaguanosine(34) in tRNA + guanine. The protein operates within tRNA modification; tRNA-queuosine biosynthesis. Functionally, catalyzes the base-exchange of a guanine (G) residue with the queuine precursor 7-aminomethyl-7-deazaguanine (PreQ1) at position 34 (anticodon wobble position) in tRNAs with GU(N) anticodons (tRNA-Asp, -Asn, -His and -Tyr). Catalysis occurs through a double-displacement mechanism. The nucleophile active site attacks the C1' of nucleotide 34 to detach the guanine base from the RNA, forming a covalent enzyme-RNA intermediate. The proton acceptor active site deprotonates the incoming PreQ1, allowing a nucleophilic attack on the C1' of the ribose to form the product. After dissociation, two additional enzymatic reactions on the tRNA convert PreQ1 to queuine (Q), resulting in the hypermodified nucleoside queuosine (7-(((4,5-cis-dihydroxy-2-cyclopenten-1-yl)amino)methyl)-7-deazaguanosine). The chain is Queuine tRNA-ribosyltransferase from Campylobacter hominis (strain ATCC BAA-381 / DSM 21671 / CCUG 45161 / LMG 19568 / NCTC 13146 / CH001A).